We begin with the raw amino-acid sequence, 609 residues long: Zinc metalloproteinase-disintegrin-like (609 aa).

Positions 1–20 (MIQVLLVTICLAALPYQGSS) are cleaved as a signal peptide. Positions 21 to 189 (IILESGNVND…KKASQLVVTA (169 aa)) are excised as a propeptide. Residues 198-393 (RFVELVLVVD…QNPECIVNEP (196 aa)) form the Peptidase M12B domain. Residues glutamate 201 and aspartate 285 each coordinate Ca(2+). Cystine bridges form between cysteine 308–cysteine 388, cysteine 348–cysteine 372, and cysteine 350–cysteine 355. Zn(2+) is bound at residue histidine 333. Glutamate 334 is a catalytic residue. Zn(2+)-binding residues include histidine 337 and histidine 343. Asparagine 371 is a glycosylation site (N-linked (GlcNAc...) asparagine). Ca(2+)-binding residues include cysteine 388, asparagine 391, valine 403, asparagine 406, leucine 408, glutamate 410, glutamate 413, and aspartate 416. The Disintegrin domain occupies 401-487 (PPVCGNELLE…ECPADVFHKN (87 aa)). 14 disulfide bridges follow: cysteine 404-cysteine 433, cysteine 415-cysteine 428, cysteine 417-cysteine 423, cysteine 427-cysteine 450, cysteine 441-cysteine 447, cysteine 446-cysteine 472, cysteine 459-cysteine 479, cysteine 466-cysteine 498, cysteine 491-cysteine 503, cysteine 510-cysteine 560, cysteine 525-cysteine 571, cysteine 538-cysteine 548, cysteine 555-cysteine 597, and cysteine 591-cysteine 602. Positions 465-467 (ECD) match the D/ECD-tripeptide motif. 5 residues coordinate Ca(2+): aspartate 467, proline 468, glutamate 470, aspartate 482, and valine 483.

This sequence belongs to the venom metalloproteinase (M12B) family. P-III subfamily. P-IIIa sub-subfamily. As to quaternary structure, monomer. Zn(2+) serves as cofactor. In terms of tissue distribution, expressed by the venom gland.

The protein localises to the secreted. Functionally, this protein is a zinc metalloprotease from snake venom that possesses hemorrhagic activity. The chain is Zinc metalloproteinase-disintegrin-like from Crotalus durissus durissus (Central American rattlesnake).